The following is a 320-amino-acid chain: Cytochrome f (320 aa).

The first 35 residues, 1-35 (MKLNSLINLIQKSIYSCTLLLIILNIICVAPNSSN), serve as a signal peptide directing secretion. Positions 37, 57, 60, and 61 each coordinate heme. A helical membrane pass occupies residues 286 to 306 (IKGMIVFFFASVLAQIFFVLK).

It belongs to the cytochrome f family. As to quaternary structure, the 4 large subunits of the cytochrome b6-f complex are cytochrome b6, subunit IV (17 kDa polypeptide, petD), cytochrome f and the Rieske protein, while the 4 small subunits are PetG, PetL, PetM and PetN. The complex functions as a dimer. The cofactor is heme.

The protein localises to the plastid. The protein resides in the chloroplast thylakoid membrane. Component of the cytochrome b6-f complex, which mediates electron transfer between photosystem II (PSII) and photosystem I (PSI), cyclic electron flow around PSI, and state transitions. The polypeptide is Cytochrome f (Pyropia yezoensis (Susabi-nori)).